Reading from the N-terminus, the 566-residue chain is Putative ABC transporter ATP-binding protein BC_2655 (566 aa).

2 consecutive ABC transporter domains span residues 5–246 and 300–533; these read ISFE…GLRE and LKVE…ANLR. Residues 39 to 46 and 333 to 340 contribute to the ATP site; these read GRSGSGKS and GHNGAGKS.

The protein belongs to the ABC transporter superfamily.

It is found in the cell membrane. In terms of biological role, probably part of an ABC transporter complex. Responsible for energy coupling to the transport system. In Bacillus cereus (strain ATCC 14579 / DSM 31 / CCUG 7414 / JCM 2152 / NBRC 15305 / NCIMB 9373 / NCTC 2599 / NRRL B-3711), this protein is Putative ABC transporter ATP-binding protein BC_2655.